We begin with the raw amino-acid sequence, 287 residues long: Phosphatidylserine decarboxylase proenzyme (287 aa).

Residues Asp90, His147, and Ser253 each act as charge relay system; for autoendoproteolytic cleavage activity in the active site. Residue Ser253 is the Schiff-base intermediate with substrate; via pyruvic acid; for decarboxylase activity of the active site. Residue Ser253 is modified to Pyruvic acid (Ser); by autocatalysis.

It belongs to the phosphatidylserine decarboxylase family. PSD-B subfamily. Prokaryotic type I sub-subfamily. In terms of assembly, heterodimer of a large membrane-associated beta subunit and a small pyruvoyl-containing alpha subunit. Requires pyruvate as cofactor. Is synthesized initially as an inactive proenzyme. Formation of the active enzyme involves a self-maturation process in which the active site pyruvoyl group is generated from an internal serine residue via an autocatalytic post-translational modification. Two non-identical subunits are generated from the proenzyme in this reaction, and the pyruvate is formed at the N-terminus of the alpha chain, which is derived from the carboxyl end of the proenzyme. The autoendoproteolytic cleavage occurs by a canonical serine protease mechanism, in which the side chain hydroxyl group of the serine supplies its oxygen atom to form the C-terminus of the beta chain, while the remainder of the serine residue undergoes an oxidative deamination to produce ammonia and the pyruvoyl prosthetic group on the alpha chain. During this reaction, the Ser that is part of the protease active site of the proenzyme becomes the pyruvoyl prosthetic group, which constitutes an essential element of the active site of the mature decarboxylase.

Its subcellular location is the cell membrane. The enzyme catalyses a 1,2-diacyl-sn-glycero-3-phospho-L-serine + H(+) = a 1,2-diacyl-sn-glycero-3-phosphoethanolamine + CO2. Its pathway is phospholipid metabolism; phosphatidylethanolamine biosynthesis; phosphatidylethanolamine from CDP-diacylglycerol: step 2/2. In terms of biological role, catalyzes the formation of phosphatidylethanolamine (PtdEtn) from phosphatidylserine (PtdSer). In Aliivibrio fischeri (strain ATCC 700601 / ES114) (Vibrio fischeri), this protein is Phosphatidylserine decarboxylase proenzyme.